The following is a 428-amino-acid chain: Cyclic AMP-responsive element-binding protein 3-like protein 3-A (428 aa).

The Cytoplasmic portion of the chain corresponds to 1–286 (MENYSDQGGD…VMNGSNKPVQ (286 aa)). Low complexity predominate over residues 67-83 (VSGSPVWSPSPSDSGIS). The interval 67 to 104 (VSGSPVWSPSPSDSGISEDPHSDHIDSPPPNASPPMEP) is disordered. The segment covering 93–103 (SPPPNASPPME) has biased composition (pro residues). In terms of domain architecture, bZIP spans 210-273 (ILKKIRRKIR…ISLMEQLRRL (64 aa)). A basic motif region spans residues 212–241 (KKIRRKIRNKQSAQESRKKKKEYIDGLESR). Residues 252 to 273 (LQRKVFQLEKCNISLMEQLRRL) are leucine-zipper. A helical; Signal-anchor for type II membrane protein transmembrane segment spans residues 287-303 (AGTCVLVLLLSFTLILL). At 304–428 (PNLKPFTDTK…SRRSPHADDM (125 aa)) the chain is on the lumenal side. A disordered region spans residues 381-428 (TEYDPESHNHSFDQHDEHHHGDPITGHVATVTLNPRRGSRRSPHADDM). Basic and acidic residues predominate over residues 385–402 (PESHNHSFDQHDEHHHGD). Asn389 is a glycosylation site (N-linked (GlcNAc...) asparagine).

The protein belongs to the bZIP family. ATF subfamily. Binds DNA as a dimer. Controlled by regulated intramembrane proteolysis (RIP). A fragment containing the cytoplasmic transcription factor domain is released by proteolysis. The cleavage seems to be performed sequentially by site-1 and site-2 proteases.

The protein localises to the endoplasmic reticulum membrane. Its subcellular location is the nucleus. Its function is as follows. Transcriptional activator. Binds the cAMP response element (CRE). Activates transcription through box-B element and CRE. Seems to function synergistically with atf6. Regulates FGF21 transcription. The protein is Cyclic AMP-responsive element-binding protein 3-like protein 3-A (creb3l3a) of Danio rerio (Zebrafish).